The sequence spans 922 residues: Coronin-7 (922 aa).

WD repeat units lie at residues 75–115 (CHSD…EALP), 124–163 (PEEL…PLTE), 166–205 (AHKD…QASQ), and 209–253 (AHEN…SALA). The segment at 419-467 (DTDLSEGFSSPSSLMSPSTPSSLGPSLSSTSGIGTSPSQRSLQSLLGPS) is disordered. Residues 427–456 (SSPSSLMSPSTPSSLGPSLSSTSGIGTSPS) are compositionally biased toward low complexity. A phosphoserine mark is found at Ser459 and Ser462. Lys469 is covalently cross-linked (Glycyl lysine isopeptide (Lys-Gly) (interchain with G-Cter in ubiquitin)). 4 WD repeats span residues 539 to 581 (QNGT…NVLT), 589 to 629 (GHTE…ERLK), 632 to 671 (GHQD…LPLQ), and 725 to 765 (DVAP…PFFL). The disordered stretch occupies residues 858-922 (GMTPVSQAPR…FEGVDEDEWD (65 aa)). Positions 881 to 893 (LEEKSDQQKKEEL) are enriched in basic and acidic residues. Ser912 is subject to Phosphoserine.

The protein belongs to the WD repeat coronin family. Interacts with clathrin adapter AP1 complex. This interaction takes place at Golgi membranes and not AP1-positive endosomal membranes. Interacts (when ubiquitinated at Lys-469) with EPS15. The membrane-associated form is phosphorylated on tyrosine residues. In terms of processing, ubiquitinated via 'Lys-33'-linked ubiquitin chains by the BCR(KLHL20) E3 ubiquitin ligase complex: 'Lys-33'-linked ubiquitination promotes interaction with EPS15 and facilitates actin polymerization at the trans-Golgi network, thereby facilitating post-Golgi trafficking. Deubiquitinated by ZRANB1/TRABID. In terms of tissue distribution, in the adult, widely expressed with highest levels in brain, thymus and kidney and low levels in skeletal and heart muscle. Not expressed in lung. In the eye, strongly expressed in the outer plexiform layer of the retina. In the intestine, expressed both in terminally differentiated epithelial cells and in crypt epithelium. In the embryo, strongest expression is seen in brain, thymus, intestine, apical epidermal layers of the skin and developing lens fibers of the eye.

The protein resides in the golgi apparatus membrane. Its subcellular location is the golgi apparatus. It localises to the trans-Golgi network. The protein localises to the cytoplasmic vesicle. It is found in the cytoplasm. The protein resides in the cytosol. Functionally, F-actin regulator involved in anterograde Golgi to endosome transport: upon ubiquitination via 'Lys-33'-linked ubiquitin chains by the BCR(KLHL20) E3 ubiquitin ligase complex, interacts with EPS15 and localizes to the trans-Golgi network, where it promotes actin polymerization, thereby facilitating post-Golgi trafficking. May play a role in the maintenance of the Golgi apparatus morphology. This chain is Coronin-7 (Coro7), found in Mus musculus (Mouse).